We begin with the raw amino-acid sequence, 354 residues long: UPF0324 membrane protein BL1094 (354 aa).

Helical transmembrane passes span 12 to 33 (IATV…FASW), 43 to 65 (FGAL…SAYV), 86 to 108 (LLRL…TQGI), 112 to 129 (PIAA…YAIA), 138 to 160 (LAIL…LAGS), 175 to 197 (VTMA…IALG), 239 to 256 (LSRV…AIWW), 271 to 293 (VAFP…VPFV), 300 to 321 (LVDF…NVNF), and 331 to 353 (PMLA…AMLF).

Belongs to the UPF0324 family.

The protein localises to the cell membrane. This chain is UPF0324 membrane protein BL1094, found in Bifidobacterium longum (strain NCC 2705).